We begin with the raw amino-acid sequence, 338 residues long: Microtubule-associated protein RP/EB family member 2 (338 aa).

Positions 1-21 (MPGPTQALSPNGENNNDIIQD) are disordered. The Calponin-homology (CH) domain maps to 57-159 (TMSRHDIIAW…FIQWFKKFFD (103 aa)). Disordered regions lie at residues 171–241 (EARQ…KDLE) and 300–338 (SEEH…FHFV). The span at 200–234 (SPTAGAAKSSPASKPGSTPSRPSSAKKAAPSSSAS) shows a compositional bias: low complexity. Positions 236–306 (SDKDLETQVI…LYASEEHESH (71 aa)) constitute an EB1 C-terminal domain. A compositionally biased stretch (basic and acidic residues) spans 300 to 327 (SEEHESHTEEHEGEEQVHEQPSSRRSTD). The span at 328–338 (SRSVSDNFHFV) shows a compositional bias: low complexity.

It belongs to the MAPRE family.

The protein localises to the cytoplasm. The protein resides in the cytoskeleton. May be involved in microtubule polymerization, and spindle function by stabilizing microtubules and anchoring them at centrosomes. This Gallus gallus (Chicken) protein is Microtubule-associated protein RP/EB family member 2 (MAPRE2).